A 361-amino-acid chain; its full sequence is Peptide chain release factor 1 (361 aa).

Q237 is subject to N5-methylglutamine. Residues 287-297 (KQQKEQSDTRK) are compositionally biased toward basic and acidic residues. Positions 287–313 (KQQKEQSDTRKSLVGSGDRSERIRTYN) are disordered.

It belongs to the prokaryotic/mitochondrial release factor family. Methylated by PrmC. Methylation increases the termination efficiency of RF1.

It is found in the cytoplasm. Functionally, peptide chain release factor 1 directs the termination of translation in response to the peptide chain termination codons UAG and UAA. This chain is Peptide chain release factor 1, found in Francisella tularensis subsp. novicida (strain U112).